A 417-amino-acid polypeptide reads, in one-letter code: Serine hydroxymethyltransferase 1 (417 aa).

Residues leucine 121 and 125–127 (GHL) contribute to the (6S)-5,6,7,8-tetrahydrofolate site. Lysine 230 carries the N6-(pyridoxal phosphate)lysine modification. (6S)-5,6,7,8-tetrahydrofolate is bound at residue 355-357 (SPF).

This sequence belongs to the SHMT family. As to quaternary structure, homodimer. Requires pyridoxal 5'-phosphate as cofactor.

It is found in the cytoplasm. The enzyme catalyses (6R)-5,10-methylene-5,6,7,8-tetrahydrofolate + glycine + H2O = (6S)-5,6,7,8-tetrahydrofolate + L-serine. The protein operates within one-carbon metabolism; tetrahydrofolate interconversion. Its pathway is amino-acid biosynthesis; glycine biosynthesis; glycine from L-serine: step 1/1. Catalyzes the reversible interconversion of serine and glycine with tetrahydrofolate (THF) serving as the one-carbon carrier. This reaction serves as the major source of one-carbon groups required for the biosynthesis of purines, thymidylate, methionine, and other important biomolecules. Also exhibits THF-independent aldolase activity toward beta-hydroxyamino acids, producing glycine and aldehydes, via a retro-aldol mechanism. The chain is Serine hydroxymethyltransferase 1 from Pseudomonas putida (strain ATCC 47054 / DSM 6125 / CFBP 8728 / NCIMB 11950 / KT2440).